A 539-amino-acid polypeptide reads, in one-letter code: Sorting nexin-27 (539 aa).

Residues 1–40 (MADEDGEGIHPSTPHRNGGGGGGSGLHCAGNGGGGGGGPR) form a disordered region. Residues 17 to 39 (NGGGGGGSGLHCAGNGGGGGGGP) are compositionally biased toward gly residues. Positions 41 to 134 (VVRIVKSESG…ELILTVLSVP (94 aa)) constitute a PDZ domain. Phosphoserine is present on residues Ser49 and Ser60. The region spanning 159–267 (QAVPISVPTY…EFLSESDENY (109 aa)) is the PX domain. One can recognise a Ras-associating domain in the interval 271–360 (SDVELRVALP…TCLTIRKWLF (90 aa)). Residues 271 to 360 (SDVELRVALP…TCLTIRKWLF (90 aa)) form an FERM-like region F1 region. The tract at residues 371 to 419 (NDLAVTYFFHQAVDDVKKGYIKAEEKSYQLQKLYEQRKMVMYLNMLRTC) is FERM-like region F2. An FERM-like region F3 region spans residues 423–523 (NEIIFPHCAC…RVFCELKWRK (101 aa)).

As to quaternary structure, core component of the SNX27-retromer, a multiprotein complex composed of SNX27, the WASH complex and the retromer complex. Interacts (via PDZ domain) with a number of target transmembrane proteins (via PDZ-binding motif): ABCC4, ADRB2, ARHGEF7, GRIA1, GRIA2, GRIN1, GRIN2A GRIN2C, KCNJ6, KCNJ9 and SLC2A1/GLUT1. Interacts (via the FERM-like regions) with the WASH complex. Interacts with SNX1. Interacts with CYTIP. Interacts with DGKZ. Interacts with MCC. Interacts (via PDZ domains) with SLC9A3; directs SLC9A3 membrane insertion from early endosomes to the plasma membrane. Isoform 1 is predominantly expressed in the testis, whereas isoform 2 is predominant in various brain regions, including, neocortex, paleocortex, striatum, hippocampus, cerebellum and brain stem. Expressed in cells of hematopoietic origin.

The protein resides in the early endosome membrane. The protein localises to the cytoplasm. It is found in the cytosol. Functionally, involved in the retrograde transport from endosome to plasma membrane, a trafficking pathway that promotes the recycling of internalized transmembrane proteins. Following internalization, endocytosed transmembrane proteins are delivered to early endosomes and recycled to the plasma membrane instead of being degraded in lysosomes. SNX27 specifically binds and directs sorting of a subset of transmembrane proteins containing a PDZ-binding motif at the C-terminus: following interaction with target transmembrane proteins, associates with the retromer complex, preventing entry into the lysosomal pathway, and promotes retromer-tubule based plasma membrane recycling. SNX27 also binds with the WASH complex. Interacts with membranes containing phosphatidylinositol-3-phosphate (PtdIns(3P)). May participate in establishment of natural killer cell polarity. Recruits CYTIP to early endosomes. The protein is Sorting nexin-27 (Snx27) of Rattus norvegicus (Rat).